The chain runs to 322 residues: Ras association domain-containing protein 4 (322 aa).

Positions 96-161 are disordered; sequence EASPQDSKVP…SKSRAPSEAQ (66 aa). S142 is modified (phosphoserine). The region spanning 175 to 264 is the Ras-associating domain; sequence YNHKTSVFTP…KIFLMEADLS (90 aa). Residues 271–318 form the SARAH domain; that stretch reads VAQYIKFEMPVLDSFVEKLKEEEEREIIKLTMKFQALRLTMLQRLEQL.

In terms of assembly, interacts directly with activated KRAS in a GTP-dependent manner.

In terms of biological role, potential tumor suppressor. May act as a KRAS effector protein. May promote apoptosis and cell cycle arrest. The sequence is that of Ras association domain-containing protein 4 (Rassf4) from Mus musculus (Mouse).